The following is a 563-amino-acid chain: (R)-mandelonitrile lyase 2 (563 aa).

The signal sequence occupies residues 1–27; that stretch reads MEKSTMSAILLVLYIFVLHLQYSEVHS. FAD is bound by residues 63-64, 82-83, V129, T133, and 137-140; these read TS, ER, and NAGV. 2 N-linked (GlcNAc...) asparagine glycosylation sites follow: N145 and N162. An FAD-binding site is contributed by V244. Substrate is bound at residue C355. Residues N379 and N419 are each glycosylated (N-linked (GlcNAc...) asparagine). Cysteines 426 and 477 form a disulfide. Position 484 (Y484) interacts with substrate. FAD contacts are provided by residues 485–486 and G514; that span reads WH. Catalysis depends on H486, which acts as the Proton donor. H524 (proton acceptor) is an active-site residue. 525-526 contributes to the FAD binding site; the sequence is PQ.

It belongs to the GMC oxidoreductase family. Monomer. The cofactor is FAD. In terms of processing, glycosylated. Deglycosylation does not affect the enzymatic activity.

The catalysed reaction is (R)-mandelonitrile = benzaldehyde + hydrogen cyanide. Functionally, involved in cyanogenesis, the release of HCN from injured tissues. Catalyzes the stereospecific addition of HCN to a variety of aldehydes in vitro. Has no oxidase activity. The redox properties of the FAD cofactor appear to be unimportant for catalysis. The polypeptide is (R)-mandelonitrile lyase 2 (MDL2) (Prunus dulcis (Almond)).